The chain runs to 292 residues: MGKIEATSKEEKLRVQKEAEARRRAYRDLKKEARQMQKEVKFDTDDNSELPKKRFYRQRAHSNPFSDHRLEYPRSPDTMDWSKFYPQYYDSESKKMTSEVEIADIGCGYGGLLINLAPEFPDKLLLGMEIRVQVTQYVEDRIIALRNQYRNELQNNYQNISVLRGNAMKFLPNFFHKAQLSKMFFCFPDPHFKQRKHKARIITNTLLAEYAYVLKEGGIIYTITDVEDLHNWMVKHLEEHPMFERLSKEWEKQDKCVSIMWNSTEEGKKVTRNKGSKWVACFKRLPTPDDCE.

The disordered stretch occupies residues 1–52; it reads MGKIEATSKEEKLRVQKEAEARRRAYRDLKKEARQMQKEVKFDTDDNSELPK. S-adenosyl-L-methionine contacts are provided by residues Gly106, 129 to 130, 166 to 167, and Cys186; these read EI and NA. Asp189 is an active-site residue. 264-266 serves as a coordination point for S-adenosyl-L-methionine; sequence TEE.

The protein belongs to the class I-like SAM-binding methyltransferase superfamily. TrmB family. As to quaternary structure, forms a complex with TRM82.

The protein localises to the nucleus. It catalyses the reaction guanosine(46) in tRNA + S-adenosyl-L-methionine = N(7)-methylguanosine(46) in tRNA + S-adenosyl-L-homocysteine. Its pathway is tRNA modification; N(7)-methylguanine-tRNA biosynthesis. Catalyzes the formation of N(7)-methylguanine at position 46 (m7G46) in tRNA. This chain is tRNA (guanine-N(7)-)-methyltransferase, found in Debaryomyces hansenii (strain ATCC 36239 / CBS 767 / BCRC 21394 / JCM 1990 / NBRC 0083 / IGC 2968) (Yeast).